Consider the following 203-residue polypeptide: MRPFTRETGLAVPLDRVNVDTDQIIPKQFLKRIERTGFGQFLFHDWRYLPDGSPNPEFVLNRPQYAGATILIAGRNFGSGSSREHAPWALSDYGFRAIIAPSFADIFYNNCFQNGLLPVVLPEEAVAELMRRAQEPGYRLTVDLERCVVEDDAGFRVDFAIDAFRRHRMLHGLDDIGLTLQYEDEIAAYEARRPAWLPTTPAR.

This sequence belongs to the LeuD family. LeuD type 1 subfamily. Heterodimer of LeuC and LeuD.

The catalysed reaction is (2R,3S)-3-isopropylmalate = (2S)-2-isopropylmalate. It functions in the pathway amino-acid biosynthesis; L-leucine biosynthesis; L-leucine from 3-methyl-2-oxobutanoate: step 2/4. Its function is as follows. Catalyzes the isomerization between 2-isopropylmalate and 3-isopropylmalate, via the formation of 2-isopropylmaleate. The polypeptide is 3-isopropylmalate dehydratase small subunit (Symbiobacterium thermophilum (strain DSM 24528 / JCM 14929 / IAM 14863 / T)).